We begin with the raw amino-acid sequence, 427 residues long: Serine--tRNA ligase (427 aa).

231 to 233 (TAE) lines the L-serine pocket. Position 262-264 (262-264 (RSE)) interacts with ATP. Glu-285 is a binding site for L-serine. An ATP-binding site is contributed by 349–352 (EISS). Ser-385 is a binding site for L-serine.

The protein belongs to the class-II aminoacyl-tRNA synthetase family. Type-1 seryl-tRNA synthetase subfamily. As to quaternary structure, homodimer. The tRNA molecule binds across the dimer.

It localises to the cytoplasm. It carries out the reaction tRNA(Ser) + L-serine + ATP = L-seryl-tRNA(Ser) + AMP + diphosphate + H(+). It catalyses the reaction tRNA(Sec) + L-serine + ATP = L-seryl-tRNA(Sec) + AMP + diphosphate + H(+). It participates in aminoacyl-tRNA biosynthesis; selenocysteinyl-tRNA(Sec) biosynthesis; L-seryl-tRNA(Sec) from L-serine and tRNA(Sec): step 1/1. Functionally, catalyzes the attachment of serine to tRNA(Ser). Is also able to aminoacylate tRNA(Sec) with serine, to form the misacylated tRNA L-seryl-tRNA(Sec), which will be further converted into selenocysteinyl-tRNA(Sec). The sequence is that of Serine--tRNA ligase from Sinorhizobium fredii (strain NBRC 101917 / NGR234).